A 500-amino-acid chain; its full sequence is MAKAELMDYDEAIEMFEPVLGFEVHVELNTRTKMFSDAPNFFGGEPNTNITPVDLGLPGSLPVVNEQAVKHSISLGLALGCEIAPSSRFARKNYFYPDLAKNYQISQFDEPIAFRGSVEVEMPDGRIVTVPIERAHMEEDAGKLTHVGGATGRIQGADHSLVDYNRAGVPLVEIVTDIIYGAEGEAPELAKAYVSTIRDIVVALGISDAKMERGNLRCDANISLSPRGSGKLGTRTETKNVNSLRSVERAIRYEIQRQAAILAAGGTITQETRHWHEDTGRTSAGRPKSDADDYRYFPEPDLLPVQPSAELIEELRAALPEAPAIRRRRLKAEWGFTDLEFQDVVNSGLLTELVDTVEAGAAPQAARKWWTGEIARIANARGVDAATLISPTQVASVIELVEAGTLTNRLARDVIEGVIDGEGTAQEVVDARGLAVVSDDGPLIEAIDAALQAQPDVLAKIRDGKVQAAGAVIGAVMKAMRGQADAARVRELVLERAQAS.

This sequence belongs to the GatB/GatE family. GatB subfamily. As to quaternary structure, heterotrimer of A, B and C subunits.

It catalyses the reaction L-glutamyl-tRNA(Gln) + L-glutamine + ATP + H2O = L-glutaminyl-tRNA(Gln) + L-glutamate + ADP + phosphate + H(+). The catalysed reaction is L-aspartyl-tRNA(Asn) + L-glutamine + ATP + H2O = L-asparaginyl-tRNA(Asn) + L-glutamate + ADP + phosphate + 2 H(+). Functionally, allows the formation of correctly charged Asn-tRNA(Asn) or Gln-tRNA(Gln) through the transamidation of misacylated Asp-tRNA(Asn) or Glu-tRNA(Gln) in organisms which lack either or both of asparaginyl-tRNA or glutaminyl-tRNA synthetases. The reaction takes place in the presence of glutamine and ATP through an activated phospho-Asp-tRNA(Asn) or phospho-Glu-tRNA(Gln). The protein is Aspartyl/glutamyl-tRNA(Asn/Gln) amidotransferase subunit B of Clavibacter michiganensis subsp. michiganensis (strain NCPPB 382).